The chain runs to 352 residues: MFEKRTWIRLPRNVVVGHGVLGQTIEAVSELHLTGRPLVVSSPTPHDVAGKQVVAQFEDEGYDPSEIVIEEASFDAVQQVIDHASDIDAGFLLGVGGGKAIDITKMAADDLGLGFVSVPTAASHDGIVSGRGSVPEGDTRHSVAAEPPLAVIADTEVLAEAPWRLTTAGCADIISNYTAVRDWQLAHRLKNVHYSEYAGALSQMTAEMLVESADSIKQGLEESSWIVVKALVSSGVAMSIADSSRPASGAEHLFSHQLDRLVPDGALHGHQVGVGSIMTEYLHSGQKGKWRDARDALAAIGAPTTADELGIDDETVIEALTTAHQIRDRYTVLGDGMSEEAAIEAATVTGVI.

NAD(+) contacts are provided by residues 98-102 (GKAID) and 120-123 (TAAS). D125 contributes to the substrate binding site. An NAD(+)-binding site is contributed by S129. D172 is a substrate binding site. Residues D172 and H252 each coordinate Zn(2+). A substrate-binding site is contributed by H256. H268 is a binding site for Zn(2+).

The protein belongs to the glycerol-1-phosphate dehydrogenase family. Requires Zn(2+) as cofactor.

It is found in the cytoplasm. It catalyses the reaction sn-glycerol 1-phosphate + NAD(+) = dihydroxyacetone phosphate + NADH + H(+). The enzyme catalyses sn-glycerol 1-phosphate + NADP(+) = dihydroxyacetone phosphate + NADPH + H(+). The protein operates within membrane lipid metabolism; glycerophospholipid metabolism. Its function is as follows. Catalyzes the NAD(P)H-dependent reduction of dihydroxyacetonephosphate (DHAP or glycerone phosphate) to glycerol 1-phosphate (G1P). The G1P thus generated is used as the glycerophosphate backbone of phospholipids in the cellular membranes of Archaea. This Haloarcula marismortui (strain ATCC 43049 / DSM 3752 / JCM 8966 / VKM B-1809) (Halobacterium marismortui) protein is Glycerol-1-phosphate dehydrogenase [NAD(P)+].